Consider the following 219-residue polypeptide: Octanoyltransferase (219 aa).

The BPL/LPL catalytic domain maps to 32–207 (ENSQDEIWIV…TLSQELGLDK (176 aa)). Substrate is bound by residues 71–78 (RGGQVTYH), 138–140 (SLG), and 151–153 (GLA). Residue cysteine 169 is the Acyl-thioester intermediate of the active site.

This sequence belongs to the LipB family.

The protein localises to the cytoplasm. It catalyses the reaction octanoyl-[ACP] + L-lysyl-[protein] = N(6)-octanoyl-L-lysyl-[protein] + holo-[ACP] + H(+). Its pathway is protein modification; protein lipoylation via endogenous pathway; protein N(6)-(lipoyl)lysine from octanoyl-[acyl-carrier-protein]: step 1/2. Functionally, catalyzes the transfer of endogenously produced octanoic acid from octanoyl-acyl-carrier-protein onto the lipoyl domains of lipoate-dependent enzymes. Lipoyl-ACP can also act as a substrate although octanoyl-ACP is likely to be the physiological substrate. In Shewanella pealeana (strain ATCC 700345 / ANG-SQ1), this protein is Octanoyltransferase.